The primary structure comprises 195 residues: HTH-type transcriptional regulator BetI (195 aa).

One can recognise an HTH tetR-type domain in the interval 8–68 (SIRRRQLIDA…ATMRDITSQL (61 aa)). Residues 31–50 (TIAQIARRAGVSTGIISHYF) constitute a DNA-binding region (H-T-H motif).

Its pathway is amine and polyamine biosynthesis; betaine biosynthesis via choline pathway [regulation]. Repressor involved in the biosynthesis of the osmoprotectant glycine betaine. It represses transcription of the choline transporter BetT and the genes of BetAB involved in the synthesis of glycine betaine. In Escherichia coli (strain SMS-3-5 / SECEC), this protein is HTH-type transcriptional regulator BetI.